A 147-amino-acid polypeptide reads, in one-letter code: Hemoglobin subunit epsilon (147 aa).

In terms of domain architecture, Globin spans H3 to H147. A Phosphoserine modification is found at S51. Heme b contacts are provided by H64 and H93.

The protein belongs to the globin family. Red blood cells.

Its function is as follows. Hemoglobin epsilon chain is a beta-type chain found in early embryos. The chain is Hemoglobin subunit epsilon (HBE1) from Oryctolagus cuniculus (Rabbit).